The sequence spans 125 residues: Large ribosomal subunit protein bL12 (125 aa).

Belongs to the bacterial ribosomal protein bL12 family. As to quaternary structure, homodimer. Part of the ribosomal stalk of the 50S ribosomal subunit. Forms a multimeric L10(L12)X complex, where L10 forms an elongated spine to which 2 to 4 L12 dimers bind in a sequential fashion. Binds GTP-bound translation factors.

Its function is as follows. Forms part of the ribosomal stalk which helps the ribosome interact with GTP-bound translation factors. Is thus essential for accurate translation. The protein is Large ribosomal subunit protein bL12 of Francisella tularensis subsp. holarctica (strain FTNF002-00 / FTA).